Reading from the N-terminus, the 130-residue chain is Transcription antitermination protein NusB (130 aa).

It belongs to the NusB family.

Functionally, involved in transcription antitermination. Required for transcription of ribosomal RNA (rRNA) genes. Binds specifically to the boxA antiterminator sequence of the ribosomal RNA (rrn) operons. The sequence is that of Transcription antitermination protein NusB from Bacillus velezensis (strain DSM 23117 / BGSC 10A6 / LMG 26770 / FZB42) (Bacillus amyloliquefaciens subsp. plantarum).